The primary structure comprises 185 residues: NADH-ubiquinone oxidoreductase chain 6 (185 aa).

5 helical membrane-spanning segments follow: residues 4 to 24, 33 to 53, 54 to 74, 94 to 114, and 159 to 179; these read LTYY…IFII, ILYM…IGLG, IFSL…FLFI, LPLV…IYSN, and AFIL…PISI.

Belongs to the complex I subunit 6 family. As to quaternary structure, complex I is composed of 37 different subunits.

It is found in the mitochondrion membrane. The catalysed reaction is a ubiquinone + NADH + 5 H(+)(in) = a ubiquinol + NAD(+) + 4 H(+)(out). Core subunit of the mitochondrial membrane respiratory chain NADH dehydrogenase (Complex I) that is believed to belong to the minimal assembly required for catalysis. Complex I functions in the transfer of electrons from NADH to the respiratory chain. The immediate electron acceptor for the enzyme is believed to be ubiquinone. This chain is NADH-ubiquinone oxidoreductase chain 6 (ND6), found in Yarrowia lipolytica (strain CLIB 122 / E 150) (Yeast).